Here is a 332-residue protein sequence, read N- to C-terminus: Large ribosomal subunit protein mL44 (332 aa).

The transit peptide at 1–30 (MASGLVRLLQQGPRCLLAPVAPKLVPPVRG) directs the protein to the mitochondrion. The 143-residue stretch at 86 to 228 (DLLKTAFVNS…LITQMTGKEL (143 aa)) folds into the RNase III domain. Positions 236–306 (NPMGLLVEEL…ARVALRKLYG (71 aa)) constitute a DRBM domain.

This sequence belongs to the ribonuclease III family. Mitochondrion-specific ribosomal protein mL44 subfamily. Component of the mitochondrial ribosome large subunit (39S) which comprises a 16S rRNA and about 50 distinct proteins.

The protein localises to the mitochondrion. Component of the 39S subunit of mitochondrial ribosome. May have a function in the assembly/stability of nascent mitochondrial polypeptides exiting the ribosome. This Pongo abelii (Sumatran orangutan) protein is Large ribosomal subunit protein mL44 (MRPL44).